A 547-amino-acid chain; its full sequence is Glucose-6-phosphate isomerase (547 aa).

The active-site Proton donor is E351. Active-site residues include H382 and K509.

Belongs to the GPI family.

Its subcellular location is the cytoplasm. The catalysed reaction is alpha-D-glucose 6-phosphate = beta-D-fructose 6-phosphate. The protein operates within carbohydrate biosynthesis; gluconeogenesis. Its pathway is carbohydrate degradation; glycolysis; D-glyceraldehyde 3-phosphate and glycerone phosphate from D-glucose: step 2/4. Catalyzes the reversible isomerization of glucose-6-phosphate to fructose-6-phosphate. This is Glucose-6-phosphate isomerase from Coxiella burnetii (strain Dugway 5J108-111).